The following is a 118-amino-acid chain: MARVKTGVVRRRRHKKVLKLARGFFSARHKHFRKAKEQLERSLVYAYRDRRQKKRDFRRLWIVRINAACRLNDLSYSRFMNGLKKANIELDRKILADLAMNDAKAFAALAKQAKDALK.

Belongs to the bacterial ribosomal protein bL20 family.

Its function is as follows. Binds directly to 23S ribosomal RNA and is necessary for the in vitro assembly process of the 50S ribosomal subunit. It is not involved in the protein synthesizing functions of that subunit. The protein is Large ribosomal subunit protein bL20 of Campylobacter curvus (strain 525.92).